The sequence spans 385 residues: Rubredoxin-NAD(+) reductase (385 aa).

Residues A8–A11, S32–R33, I79, E156, D275, and I293 contribute to the FAD site.

It belongs to the FAD-dependent oxidoreductase family. As to quaternary structure, homodimer. FAD is required as a cofactor.

It is found in the cytoplasm. The enzyme catalyses 2 reduced [rubredoxin] + NAD(+) + H(+) = 2 oxidized [rubredoxin] + NADH. It functions in the pathway hydrocarbon metabolism; alkane degradation. Involved in the hydrocarbon hydroxylating system, which transfers electrons from NADH to rubredoxin reductase and then through rubredoxin to alkane 1 monooxygenase. The chain is Rubredoxin-NAD(+) reductase (alkT) from Ectopseudomonas oleovorans (Pseudomonas oleovorans).